Reading from the N-terminus, the 564-residue chain is Dihydroxy-acid dehydratase (564 aa).

Residue Asp-80 coordinates Mg(2+). A [2Fe-2S] cluster-binding site is contributed by Cys-121. Positions 122 and 123 each coordinate Mg(2+). Lys-123 is subject to N6-carboxylysine. A [2Fe-2S] cluster-binding site is contributed by Cys-194. Glu-447 contributes to the Mg(2+) binding site. Ser-473 (proton acceptor) is an active-site residue.

Belongs to the IlvD/Edd family. As to quaternary structure, homodimer. [2Fe-2S] cluster serves as cofactor. The cofactor is Mg(2+).

It carries out the reaction (2R)-2,3-dihydroxy-3-methylbutanoate = 3-methyl-2-oxobutanoate + H2O. It catalyses the reaction (2R,3R)-2,3-dihydroxy-3-methylpentanoate = (S)-3-methyl-2-oxopentanoate + H2O. It functions in the pathway amino-acid biosynthesis; L-isoleucine biosynthesis; L-isoleucine from 2-oxobutanoate: step 3/4. The protein operates within amino-acid biosynthesis; L-valine biosynthesis; L-valine from pyruvate: step 3/4. Functionally, functions in the biosynthesis of branched-chain amino acids. Catalyzes the dehydration of (2R,3R)-2,3-dihydroxy-3-methylpentanoate (2,3-dihydroxy-3-methylvalerate) into 2-oxo-3-methylpentanoate (2-oxo-3-methylvalerate) and of (2R)-2,3-dihydroxy-3-methylbutanoate (2,3-dihydroxyisovalerate) into 2-oxo-3-methylbutanoate (2-oxoisovalerate), the penultimate precursor to L-isoleucine and L-valine, respectively. The protein is Dihydroxy-acid dehydratase of Listeria welshimeri serovar 6b (strain ATCC 35897 / DSM 20650 / CCUG 15529 / CIP 8149 / NCTC 11857 / SLCC 5334 / V8).